The following is a 713-amino-acid chain: Phospholipase A1 PLIP2, chloroplastic (713 aa).

The N-terminal 32 residues, 1 to 32 (MDSLCLNSGLHGVIPAITAVGNGGCGGVVEVR), are a transit peptide targeting the chloroplast. Disordered stretches follow at residues 118-140 (WKHE…DEEV) and 232-261 (ALKA…EKNK). Over residues 122 to 140 (EEEDDDEVEDEDGDEDEEV) the composition is skewed to acidic residues. Positions 426–430 (GHSLG) match the GXSXG motif. The active-site Acyl-ester intermediate is Ser428. Active-site charge relay system residues include Asp489 and His608.

This sequence belongs to the AB hydrolase superfamily. Lipase family.

Its subcellular location is the plastid. It is found in the chloroplast membrane. The protein resides in the chloroplast stroma. It catalyses the reaction a 1,2-diacyl-3-O-(beta-D-galactosyl)-sn-glycerol + 2 H2O = 3-beta-D-galactosyl-sn-glycerol + 2 a fatty acid + 2 H(+). The enzyme catalyses a 1,2-diacyl-sn-glycero-3-phosphocholine + H2O = a 2-acyl-sn-glycero-3-phosphocholine + a fatty acid + H(+). The catalysed reaction is 1-hexadecanoyl-2-(9Z-octadecenoyl)-sn-glycero-3-phosphocholine + H2O = 2-(9Z-octadecenoyl)-sn-glycero-3-phosphocholine + hexadecanoate + H(+). It carries out the reaction 1,2-di-(9Z-octadecenoyl)-sn-glycero-3-phosphocholine + H2O = 2-(9Z-octadecenoyl)-sn-glycero-3-phosphocholine + (9Z)-octadecenoate + H(+). It catalyses the reaction 1-octadecanoyl-2-(9Z-octadecenoyl)-sn-glycero-3-phosphocholine + H2O = 2-(9Z-octadecenoyl)-sn-glycero-3-phosphocholine + octadecanoate + H(+). The enzyme catalyses 1-octadecanoyl-2-(9Z,12Z)-octadecadienoyl-sn-glycero-3-phosphocholine + H2O = 2-(9Z,12Z-octadecadienoyl)-sn-glycero-3-phosphocholine + octadecanoate + H(+). The catalysed reaction is 1,2-di-(9Z,12Z-octadecadienoyl)-sn-glycero-3-phosphocholine + H2O = 2-(9Z,12Z-octadecadienoyl)-sn-glycero-3-phosphocholine + (9Z,12Z)-octadecadienoate + H(+). It carries out the reaction 1-(9Z-octadecenoyl)-2-hexadecanoyl-sn-glycero-3-phosphocholine + H2O = 2-hexadecanoyl-sn-glycero-3-phosphocholine + (9Z)-octadecenoate + H(+). Sn-1-specific phospholipase A1 that catalyzes the initial step of oxylipins and jasmonate (JA) biosynthesis. Hydrolyzes polyunsaturated acyl groups preferentially from chloroplastic monogalactosyldiacylglycerol (MGDG). May function downstream of abscisic acid (ABA) and provide a link between ABA-mediated abiotic stress responses and oxylipin and JA signalings. In vitro, possesses broad substrate specificity. Can hydrolyze the galactolipids monogalactosyldiacylglycerol (MGDG) and digalactosyldiacylglycerol (DGDG), the sulfolipid sulfoquinovosyldiacylglycerol (SQDG), and the phoshpolipids phosphatidylcholine (PC), and phosphatidylglycerol (PG). The chain is Phospholipase A1 PLIP2, chloroplastic from Arabidopsis thaliana (Mouse-ear cress).